The sequence spans 148 residues: Putative carbonic anhydrase (148 aa).

The Alpha-carbonic anhydrase domain maps to 1–146 (CLKRLQPGEM…LNGRTVFEVH (146 aa)).

This sequence belongs to the alpha-carbonic anhydrase family. The cofactor is Zn(2+). Component of the acid-insoluble organic matrix of the aragonitic skeleton (at protein level).

It is found in the secreted. The enzyme catalyses hydrogencarbonate + H(+) = CO2 + H2O. In terms of biological role, reversible hydration of carbon dioxide. The protein is Putative carbonic anhydrase of Acropora millepora (Staghorn coral).